We begin with the raw amino-acid sequence, 403 residues long: Creatinase (403 aa).

His232 is a catalytic residue.

It belongs to the peptidase M24 family. Creatinase subfamily. As to quaternary structure, homodimer.

It carries out the reaction creatine + H2O = sarcosine + urea. The chain is Creatinase from Pseudomonas putida (Arthrobacter siderocapsulatus).